A 79-amino-acid chain; its full sequence is Acyl carrier protein (79 aa).

The Carrier domain occupies 2-77 (STIEERVKKI…QAIDYVKSHV (76 aa)). The residue at position 37 (Ser37) is an O-(pantetheine 4'-phosphoryl)serine.

Belongs to the acyl carrier protein (ACP) family. 4'-phosphopantetheine is transferred from CoA to a specific serine of apo-ACP by AcpS. This modification is essential for activity because fatty acids are bound in thioester linkage to the sulfhydryl of the prosthetic group.

It localises to the cytoplasm. It participates in lipid metabolism; fatty acid biosynthesis. Its function is as follows. Carrier of the growing fatty acid chain in fatty acid biosynthesis. This is Acyl carrier protein from Xanthomonas oryzae pv. oryzae (strain MAFF 311018).